We begin with the raw amino-acid sequence, 819 residues long: Solute carrier organic anion transporter family member 74D (819 aa).

Residues 1–157 (MTKSNGDVEA…GSSAESSSSC (157 aa)) are disordered. The Cytoplasmic portion of the chain corresponds to 1-174 (MTKSNGDVEA…RWARRFASTH (174 aa)). Composition is skewed to polar residues over residues 24 to 34 (GHGQLNGNGYH), 43 to 62 (SQAFTPLLSQHNNGTTNGEV), and 71 to 81 (LYESTPSNNNE). Composition is skewed to low complexity over residues 91–111 (LKNGLGNILSSNNNGTGNGHS) and 144–157 (DLNGGSSAESSSSC). The helical transmembrane segment at 175 to 195 (VFMVVFLLAYILQGMYMTYFV) threads the bilayer. At 196–213 (SVITTIEKLFQIKSKTTG) the chain is on the extracellular side. Residues 214–234 (ILLSASEMGQICTAMLLTYFA) form a helical membrane-spanning segment. At 235 to 242 (GRGHRPRW) the chain is on the cytoplasmic side. The chain crosses the membrane as a helical span at residues 243-263 (IACGMVLFSIAAFSCALPHFI). The Extracellular portion of the chain corresponds to 264 to 332 (FGEQLMHSSV…LEQASHSKIT (69 aa)). Residues N284, N293, and N309 are each glycosylated (N-linked (GlcNAc...) asparagine). Residues 333–353 (VIVLCIFFGSLLSSGIGQTAV) traverse the membrane as a helical segment. At 354 to 373 (ATLGIPYIDDNVGSKQSPMY) the chain is on the cytoplasmic side. The chain crosses the membrane as a helical span at residues 374–394 (MAVTIGMRILGPASGFIFGSF). Topologically, residues 395 to 413 (CTRWYVNFSNPGFDATDPR) are extracellular. Residue N401 is glycosylated (N-linked (GlcNAc...) asparagine). The chain crosses the membrane as a helical span at residues 414–434 (WIGAWWLGPVAIGSLMLLASI). The Cytoplasmic portion of the chain corresponds to 435-488 (AMFSFPKQLRGKQKPPGQTATPAAPVEPEEKPKLKDFPKTVRRQLSNDILMFRT). Positions 444 to 466 (RGKQKPPGQTATPAAPVEPEEKP) are disordered. The helical transmembrane segment at 489 to 509 (ASCVFHLLPIAGLYTFLPKYL) threads the bilayer. At 510 to 522 (ETQFRLATYDANM) the chain is on the extracellular side. The helical transmembrane segment at 523-543 (IAAFCGILVMGIGIVISGLFI) threads the bilayer. Residues 544-553 (LKRKPTARGV) lie on the Cytoplasmic side of the membrane. A helical membrane pass occupies residues 554–574 (AAWIAFTALVYSAGMIILMFI). The Extracellular segment spans residues 575-667 (GCSMNDFAGY…NGYCDNNCKN (93 aa)). One can recognise a Kazal-like domain in the interval 593-651 (ALIEPTCSAALNCTCDKENFAPICADGKMYISACHAGCSSSSLRPSDNRTLYSDCACIP). 3 disulfides stabilise this stretch: C599–C630, C607–C626, and C616–C649. N604 carries N-linked (GlcNAc...) asparagine glycosylation. N640 carries an N-linked (GlcNAc...) asparagine glycan. A helical transmembrane segment spans residues 668-688 (FIYFILIFAICVFMHSTSEVG). Residues 689 to 707 (SMLLVMRCTHPKDKAMAMG) are Cytoplasmic-facing. The helical transmembrane segment at 708–728 (VIQSAIGLFGNVPCPIIYGAV) threads the bilayer. At 729–756 (VDSACLIWKSVCGKHGACSLYDADTFRQ) the chain is on the extracellular side. Residues 757 to 777 (YFLGITAGIMFLAFLMDLVVW) form a helical membrane-spanning segment. The Cytoplasmic portion of the chain corresponds to 778–819 (RKAHRIDIAPEDPQEGGPASNGRTLEVSESKQPITPAPDTTV). The tract at residues 787–819 (PEDPQEGGPASNGRTLEVSESKQPITPAPDTTV) is disordered. Polar residues predominate over residues 807 to 819 (SKQPITPAPDTTV).

The protein belongs to the organo anion transporter (TC 2.A.60) family.

Its subcellular location is the cell membrane. Transporter that mediates the cellular uptake of ecdysteroids, including ecdysone, from the hemolymph. The sequence is that of Solute carrier organic anion transporter family member 74D from Drosophila melanogaster (Fruit fly).